Reading from the N-terminus, the 321-residue chain is GDP-L-fucose synthase (321 aa).

An NADP(+)-binding site is contributed by 14–20 (GGSGLVG). The active-site Proton donor/acceptor is Y143. Residues K147, 170-173 (PTNV), and H186 contribute to the NADP(+) site. 4 residues coordinate substrate: K194, W208, R215, and D277.

It belongs to the NAD(P)-dependent epimerase/dehydratase family. Fucose synthase subfamily. Homodimer.

The enzyme catalyses GDP-beta-L-fucose + NADP(+) = GDP-4-dehydro-alpha-D-rhamnose + NADPH + H(+). Its pathway is nucleotide-sugar biosynthesis; GDP-L-fucose biosynthesis via de novo pathway; GDP-L-fucose from GDP-alpha-D-mannose: step 2/2. Functionally, catalyzes the two-step NADP-dependent conversion of GDP-4-dehydro-6-deoxy-D-mannose to GDP-fucose, involving an epimerase and a reductase reaction. This Cricetulus griseus (Chinese hamster) protein is GDP-L-fucose synthase (GFUS).